Here is a 481-residue protein sequence, read N- to C-terminus: 3-isopropylmalate dehydratase large subunit (481 aa).

[4Fe-4S] cluster-binding residues include cysteine 363, cysteine 423, and cysteine 426. Positions 432 to 459 (DQLKPGERSASTSNRNFEGRQGPGGRTH) are disordered.

Belongs to the aconitase/IPM isomerase family. LeuC type 1 subfamily. As to quaternary structure, heterodimer of LeuC and LeuD. Requires [4Fe-4S] cluster as cofactor.

It catalyses the reaction (2R,3S)-3-isopropylmalate = (2S)-2-isopropylmalate. Its pathway is amino-acid biosynthesis; L-leucine biosynthesis; L-leucine from 3-methyl-2-oxobutanoate: step 2/4. In terms of biological role, catalyzes the isomerization between 2-isopropylmalate and 3-isopropylmalate, via the formation of 2-isopropylmaleate. This chain is 3-isopropylmalate dehydratase large subunit, found in Corynebacterium glutamicum (strain R).